Here is a 710-residue protein sequence, read N- to C-terminus: Probable GTP diphosphokinase RSH2, chloroplastic (710 aa).

Residues 1 to 63 (MVVATTIALY…SSLFSSASVK (63 aa)) constitute a chloroplast transit peptide. The 105-residue stretch at 233-337 (YLQHCVETAM…IKLADRLHNM (105 aa)) folds into the HD domain.

The protein belongs to the RelA/SpoT family.

It localises to the plastid. The protein localises to the chloroplast. The catalysed reaction is GTP + ATP = guanosine 3'-diphosphate 5'-triphosphate + AMP. Its function is as follows. Probable ppGpp (guanosine 3'-diphosphate 5'-diphosphate) synthetase that may be involved in a rapid plant ppGpp-mediated response to pathogens and other stresses. The polypeptide is Probable GTP diphosphokinase RSH2, chloroplastic (RSH2) (Arabidopsis thaliana (Mouse-ear cress)).